A 243-amino-acid polypeptide reads, in one-letter code: Ice-binding protein K1-A (243 aa).

An N-terminal signal peptide occupies residues 1 to 20 (MFSSTYLLAIIALAVSSVFA).

It belongs to the ice-binding protein family.

The protein resides in the secreted. In terms of biological role, binds to the surface of ice crystals. Inhibits growth of the ice crystals. Has antifreeze activity for survival under snow cover. Has high thermal hysteresis (TH) activity, which is the ability to lower the freezing point of an aqueous solution below its melting point, and thus the freezing of the cell fluid can be prevented protecting the organism from ice damage. The TH activity of this protein is 2.0 degrees Celsius at 0.11 mM. This is Ice-binding protein K1-A from Typhula ishikariensis (Gray snow mold fungus).